Reading from the N-terminus, the 477-residue chain is MFETVIGLEVHVQLNTKTKLFCSCPTSFAEHQNKNTCPTCLALPGALPVVNKEAAIKAMRFGYAVNANVNHTSIFDRKSYFYPDSPSAYQITQLSKAIVQKGELFIDLEDGSQKRIGITQAHLEADAGKNMHEGNYSKVDLNRAGTPLMEIVSEPDMRSSDEAVAYLKKLHSTVRYLDISDANMQEGSFRCDVNVSIRPKGQEAFGTRVEIKNINSFRFVAQAIAYEVQRQVEAYEDGVYAQEVHQETRLWDVAKSETRSMRGKEEAADYRYFPDPDLRPLTVTQEMIDEALVMPELPDAKVKRYVEELGIKHYDALVITSQKELAYYFEEMITQGAVAKTAVTWLTSELLGRLNKAGIEIENSPVSAKTLGELVAKIADDTVSGKGAKEVLDHMMENENRDIDVIIDELGLAQVSDDGAILAIIDEILENNQEKVEQYKGGKEKLFGFFVGQTMKVSKGTANPGKVNELLKQRLNS.

It belongs to the GatB/GatE family. GatB subfamily. Heterotrimer of A, B and C subunits.

It catalyses the reaction L-glutamyl-tRNA(Gln) + L-glutamine + ATP + H2O = L-glutaminyl-tRNA(Gln) + L-glutamate + ADP + phosphate + H(+). The enzyme catalyses L-aspartyl-tRNA(Asn) + L-glutamine + ATP + H2O = L-asparaginyl-tRNA(Asn) + L-glutamate + ADP + phosphate + 2 H(+). Allows the formation of correctly charged Asn-tRNA(Asn) or Gln-tRNA(Gln) through the transamidation of misacylated Asp-tRNA(Asn) or Glu-tRNA(Gln) in organisms which lack either or both of asparaginyl-tRNA or glutaminyl-tRNA synthetases. The reaction takes place in the presence of glutamine and ATP through an activated phospho-Asp-tRNA(Asn) or phospho-Glu-tRNA(Gln). The sequence is that of Aspartyl/glutamyl-tRNA(Asn/Gln) amidotransferase subunit B from Sulfurovum sp. (strain NBC37-1).